A 923-amino-acid chain; its full sequence is DNA gyrase subunit A (923 aa).

Residues leucine 34–leucine 534 form the Topo IIA-type catalytic domain. Catalysis depends on tyrosine 122, which acts as the O-(5'-phospho-DNA)-tyrosine intermediate. A GyrA-box motif is present at residues glutamine 561–glycine 567. The interval glutamate 881–glutamate 923 is disordered. Composition is skewed to acidic residues over residues glycine 888–alanine 901 and alanine 908–glutamate 923.

It belongs to the type II topoisomerase GyrA/ParC subunit family. In terms of assembly, heterotetramer, composed of two GyrA and two GyrB chains. In the heterotetramer, GyrA contains the active site tyrosine that forms a transient covalent intermediate with DNA, while GyrB binds cofactors and catalyzes ATP hydrolysis.

Its subcellular location is the cytoplasm. The enzyme catalyses ATP-dependent breakage, passage and rejoining of double-stranded DNA.. Functionally, a type II topoisomerase that negatively supercoils closed circular double-stranded (ds) DNA in an ATP-dependent manner to modulate DNA topology and maintain chromosomes in an underwound state. Negative supercoiling favors strand separation, and DNA replication, transcription, recombination and repair, all of which involve strand separation. Also able to catalyze the interconversion of other topological isomers of dsDNA rings, including catenanes and knotted rings. Type II topoisomerases break and join 2 DNA strands simultaneously in an ATP-dependent manner. This chain is DNA gyrase subunit A, found in Pseudomonas aeruginosa (strain ATCC 15692 / DSM 22644 / CIP 104116 / JCM 14847 / LMG 12228 / 1C / PRS 101 / PAO1).